Here is a 293-residue protein sequence, read N- to C-terminus: 4-diphosphocytidyl-2-C-methyl-D-erythritol kinase (293 aa).

Lysine 10 is a catalytic residue. ATP is bound at residue 96 to 106 (PIAAGLGGGSS). Residue aspartate 138 is part of the active site.

This sequence belongs to the GHMP kinase family. IspE subfamily.

The enzyme catalyses 4-CDP-2-C-methyl-D-erythritol + ATP = 4-CDP-2-C-methyl-D-erythritol 2-phosphate + ADP + H(+). The protein operates within isoprenoid biosynthesis; isopentenyl diphosphate biosynthesis via DXP pathway; isopentenyl diphosphate from 1-deoxy-D-xylulose 5-phosphate: step 3/6. Catalyzes the phosphorylation of the position 2 hydroxy group of 4-diphosphocytidyl-2C-methyl-D-erythritol. In Caulobacter sp. (strain K31), this protein is 4-diphosphocytidyl-2-C-methyl-D-erythritol kinase.